Reading from the N-terminus, the 307-residue chain is Homoserine kinase (307 aa).

An ATP-binding site is contributed by 92–102 (PLARGLGSSAT).

The protein belongs to the GHMP kinase family. Homoserine kinase subfamily.

It is found in the cytoplasm. It catalyses the reaction L-homoserine + ATP = O-phospho-L-homoserine + ADP + H(+). It functions in the pathway amino-acid biosynthesis; L-threonine biosynthesis; L-threonine from L-aspartate: step 4/5. Its function is as follows. Catalyzes the ATP-dependent phosphorylation of L-homoserine to L-homoserine phosphate. In Microchaete diplosiphon (Fremyella diplosiphon), this protein is Homoserine kinase (thrB).